The primary structure comprises 547 residues: Chaperonin GroEL (547 aa).

ATP-binding positions include 30–33, K51, 87–91, G415, and D496; these read TLGP and DGTTT. The disordered stretch occupies residues 528–547; sequence KGGGAPAGGGMPGGMGDMDF.

Belongs to the chaperonin (HSP60) family. As to quaternary structure, forms a cylinder of 14 subunits composed of two heptameric rings stacked back-to-back. Interacts with the co-chaperonin GroES.

The protein resides in the cytoplasm. The catalysed reaction is ATP + H2O + a folded polypeptide = ADP + phosphate + an unfolded polypeptide.. Its function is as follows. Together with its co-chaperonin GroES, plays an essential role in assisting protein folding. The GroEL-GroES system forms a nano-cage that allows encapsulation of the non-native substrate proteins and provides a physical environment optimized to promote and accelerate protein folding. This is Chaperonin GroEL from Caulobacter vibrioides (strain ATCC 19089 / CIP 103742 / CB 15) (Caulobacter crescentus).